Consider the following 586-residue polypeptide: Clathrin heavy chain linker domain-containing protein 1 (586 aa).

Residues 174–232 (MNLDALTKYMKHLEDKYAEIKQAMLIKYVPAQRKADLDEEMIVLLKRRDVAENLNKKLQ) adopt a coiled-coil conformation.

The sequence is that of Clathrin heavy chain linker domain-containing protein 1 (CLHC1) from Homo sapiens (Human).